A 465-amino-acid polypeptide reads, in one-letter code: Argininosuccinate lyase (465 aa).

This sequence belongs to the lyase 1 family. Argininosuccinate lyase subfamily.

It localises to the cytoplasm. It catalyses the reaction 2-(N(omega)-L-arginino)succinate = fumarate + L-arginine. It participates in amino-acid biosynthesis; L-arginine biosynthesis; L-arginine from L-ornithine and carbamoyl phosphate: step 3/3. In Clostridium botulinum (strain Eklund 17B / Type B), this protein is Argininosuccinate lyase.